Consider the following 478-residue polypeptide: Solute carrier family 2, facilitated glucose transporter member 8 (478 aa).

Residues 1-20 (MTPEDQEETQPLLRPPGGSA) are disordered. Residues 1-25 (MTPEDQEETQPLLRPPGGSAPRGRR) are Cytoplasmic-facing. The span at 11-20 (PLLRPPGGSA) shows a compositional bias: low complexity. The Dileucine internalization motif motif lies at 12 to 13 (LL). Residues 26–46 (VFLAAFAAALGPLSFGFALGY) form a helical membrane-spanning segment. The Extracellular segment spans residues 47–70 (SSPAIPSLRRAAPPAPHLDEDAAS). The chain crosses the membrane as a helical span at residues 71-91 (WFGAIVTLGAAAGGVLGGWLL). Residues 92–97 (DRAGRK) are Cytoplasmic-facing. A helical membrane pass occupies residues 98–118 (LSLVLCALPFVAGFAVITAAQ). The Extracellular segment spans residues 119–127 (NLWMLLGGR). Residues 128 to 148 (LLTGLACGIASLVAPVYISEI) traverse the membrane as a helical segment. Residues 149–158 (AYPEVRGLLG) lie on the Cytoplasmic side of the membrane. The helical transmembrane segment at 159–179 (SCVQLMVVTGILLAYLAGWVL) threads the bilayer. Gln162 provides a ligand contact to D-glucose. Topologically, residues 180 to 182 (EWR) are extracellular. Residues 183–203 (WLAVLGCVPPSFMLLLMCFMP) traverse the membrane as a helical segment. At 204–257 (ETPRFLLSQHKHQEAMAAMQFLWGYAQGWEEPPLGAQHQDFHVAQLRRPGVYKP) the chain is on the cytoplasmic side. Residues 258–278 (FIIGISLMAFQQLSGVNAVMF) form a helical membrane-spanning segment. D-glucose contacts are provided by residues 268–269 (QQ) and Asn274. Topologically, residues 279-293 (YAETIFEEAKFKDSS) are extracellular. The helical transmembrane segment at 294 to 314 (LASVVVGVIQVLFTATAALIM) threads the bilayer. At 315–320 (DRAGRR) the chain is on the cytoplasmic side. Residues 321 to 341 (LLLTLSGVVMVFSTSAFGTYF) traverse the membrane as a helical segment. Residues 342–368 (KLTEGGPSNSSHVDLPALVSMEAADTN) lie on the Extracellular side of the membrane. The N-linked (GlcNAc...) asparagine glycan is linked to Asn350. Residues 369-389 (VGLAWLAVGSMCLFIAGFAVG) form a helical membrane-spanning segment. The Cytoplasmic segment spans residues 390–405 (WGPIPWLLMSEIFPLH). A D-glucose-binding site is contributed by Trp395. A helical membrane pass occupies residues 406–426 (VKGVATGVCVLTNWFMAFLVT). Topologically, residues 427–439 (KEFSSLMEVLRPY) are extracellular. The helical transmembrane segment at 440–460 (GAFWLASAFCIFGVLFTLACV) threads the bilayer. Residues 461–478 (PETKGKTLEQITAHFEGR) lie on the Cytoplasmic side of the membrane.

The protein belongs to the major facilitator superfamily. Sugar transporter (TC 2.A.1.1) family. Glucose transporter subfamily. In terms of assembly, interacts with AP2B1. As to expression, abundantly expressed in testis and more moderately in lung, kidney, spleen, intestine, skeletal muscle, liver and mammary gland.

The protein localises to the cell membrane. It localises to the cytoplasmic vesicle membrane. It catalyses the reaction D-glucose(out) = D-glucose(in). The catalysed reaction is D-fructose(out) = D-fructose(in). It carries out the reaction L-dehydroascorbate(out) = L-dehydroascorbate(in). The enzyme catalyses alpha,alpha-trehalose(in) = alpha,alpha-trehalose(out). Inhibited by cytochalasin B. Functionally, insulin-regulated facilitative hexose transporter that mediates the transport of glucose and fructose. Facilitates hepatic influx of dietary trehalose, which in turn inhibits glucose and fructose influx triggering a starvation signal and hepatic autophagy through activation of AMPK and ULK1. Also able to mediate the transport of dehydroascorbate. The protein is Solute carrier family 2, facilitated glucose transporter member 8 of Bos taurus (Bovine).